Reading from the N-terminus, the 247-residue chain is Probable transcriptional regulatory protein Tola_2714 (247 aa).

Residues 1 to 21 are disordered; the sequence is MAGHSKWANIKHRKAAQDAKR.

It belongs to the TACO1 family.

Its subcellular location is the cytoplasm. The protein is Probable transcriptional regulatory protein Tola_2714 of Tolumonas auensis (strain DSM 9187 / NBRC 110442 / TA 4).